The following is a 206-amino-acid chain: Triosephosphate isomerase (206 aa).

The Electrophile role is filled by H76. Catalysis depends on E146, which acts as the Proton acceptor.

This sequence belongs to the triosephosphate isomerase family. As to quaternary structure, homodimer.

It catalyses the reaction D-glyceraldehyde 3-phosphate = dihydroxyacetone phosphate. Its pathway is carbohydrate biosynthesis; gluconeogenesis. The protein operates within carbohydrate degradation; glycolysis; D-glyceraldehyde 3-phosphate from glycerone phosphate: step 1/1. The sequence is that of Triosephosphate isomerase (Tpi) from Aedes togoi (Mosquito).